Consider the following 134-residue polypeptide: Small ribosomal subunit protein uS9 (134 aa).

The interval 109-134 is disordered; that stretch reads DARRTEPHKPSKSSKGPRAKRQKSYR. Over residues 118 to 134 the composition is skewed to basic residues; it reads PSKSSKGPRAKRQKSYR.

The protein belongs to the universal ribosomal protein uS9 family.

This Methanococcus maripaludis (strain C7 / ATCC BAA-1331) protein is Small ribosomal subunit protein uS9.